Consider the following 283-residue polypeptide: 4-hydroxy-3-methylbut-2-enyl diphosphate reductase (283 aa).

Cys12 is a [4Fe-4S] cluster binding site. (2E)-4-hydroxy-3-methylbut-2-enyl diphosphate is bound by residues His40 and His73. 2 residues coordinate dimethylallyl diphosphate: His40 and His73. The isopentenyl diphosphate site is built by His40 and His73. Cys95 is a binding site for [4Fe-4S] cluster. His123 lines the (2E)-4-hydroxy-3-methylbut-2-enyl diphosphate pocket. His123 provides a ligand contact to dimethylallyl diphosphate. His123 serves as a coordination point for isopentenyl diphosphate. The active-site Proton donor is the Glu125. Position 161 (Thr161) interacts with (2E)-4-hydroxy-3-methylbut-2-enyl diphosphate. Residue Cys189 coordinates [4Fe-4S] cluster. (2E)-4-hydroxy-3-methylbut-2-enyl diphosphate contacts are provided by Ser217, Asn219, and Ser261. Dimethylallyl diphosphate is bound by residues Ser217, Asn219, and Ser261. Isopentenyl diphosphate is bound by residues Ser217, Asn219, and Ser261.

This sequence belongs to the IspH family. [4Fe-4S] cluster is required as a cofactor.

It carries out the reaction isopentenyl diphosphate + 2 oxidized [2Fe-2S]-[ferredoxin] + H2O = (2E)-4-hydroxy-3-methylbut-2-enyl diphosphate + 2 reduced [2Fe-2S]-[ferredoxin] + 2 H(+). The catalysed reaction is dimethylallyl diphosphate + 2 oxidized [2Fe-2S]-[ferredoxin] + H2O = (2E)-4-hydroxy-3-methylbut-2-enyl diphosphate + 2 reduced [2Fe-2S]-[ferredoxin] + 2 H(+). It participates in isoprenoid biosynthesis; dimethylallyl diphosphate biosynthesis; dimethylallyl diphosphate from (2E)-4-hydroxy-3-methylbutenyl diphosphate: step 1/1. The protein operates within isoprenoid biosynthesis; isopentenyl diphosphate biosynthesis via DXP pathway; isopentenyl diphosphate from 1-deoxy-D-xylulose 5-phosphate: step 6/6. In terms of biological role, catalyzes the conversion of 1-hydroxy-2-methyl-2-(E)-butenyl 4-diphosphate (HMBPP) into a mixture of isopentenyl diphosphate (IPP) and dimethylallyl diphosphate (DMAPP). Acts in the terminal step of the DOXP/MEP pathway for isoprenoid precursor biosynthesis. In Geobacter sp. (strain M21), this protein is 4-hydroxy-3-methylbut-2-enyl diphosphate reductase.